Consider the following 460-residue polypeptide: Cysteine--tRNA ligase (460 aa).

Residue Cys28 participates in Zn(2+) binding. The 'HIGH' region signature appears at 30 to 40 (MTVYDYCHLGH). Residues Cys209, His234, and Glu238 each coordinate Zn(2+). Residues 266–270 (KMSKS) carry the 'KMSKS' region motif. Position 269 (Lys269) interacts with ATP.

Belongs to the class-I aminoacyl-tRNA synthetase family. As to quaternary structure, monomer. Zn(2+) is required as a cofactor.

It is found in the cytoplasm. It carries out the reaction tRNA(Cys) + L-cysteine + ATP = L-cysteinyl-tRNA(Cys) + AMP + diphosphate. The protein is Cysteine--tRNA ligase of Pseudomonas savastanoi pv. phaseolicola (strain 1448A / Race 6) (Pseudomonas syringae pv. phaseolicola (strain 1448A / Race 6)).